Consider the following 1178-residue polypeptide: Zinc finger CCHC domain-containing protein 2 (1178 aa).

Disordered regions lie at residues 1 to 90 (MLRM…GPSA), 207 to 249 (AARG…RVGG), 557 to 683 (VTSA…SVNQ), and 936 to 986 (LSTA…SDST). Residues 43–67 (PPPPPPPPAGPSRGPLPPPPPPRGL) show a composition bias toward pro residues. Over residues 75 to 88 (AAAGAGMPGGGGGP) the composition is skewed to gly residues. The span at 208–219 (ARGEGSRGGAED) shows a compositional bias: basic and acidic residues. Over residues 220-229 (ERGEDGDGEQ) the composition is skewed to acidic residues. Position 236 is a phosphoserine (Ser-236). The span at 580 to 594 (PQTEKEKIKKTDNRL) shows a compositional bias: basic and acidic residues. Over residues 595 to 607 (NSRINGIRLSTPQ) the composition is skewed to polar residues. Residues 632–641 (SSESYSSPSS) are compositionally biased toward low complexity. Residues 642–661 (PRHDGRESFESEEEKDRDTD) show a composition bias toward basic and acidic residues. The span at 665–683 (EDSGNPSTTRFTGYGSVNQ) shows a compositional bias: polar residues. The segment covering 937-948 (STAATSPQPASA) has biased composition (low complexity). The segment covering 959-973 (PAVPTHTPGPAPSPS) has biased composition (pro residues). Residues 974-986 (PALTHSTAQSDST) are compositionally biased toward polar residues. The segment at 1131–1148 (VSCYNCGVSGHYAQDCKQ) adopts a CCHC-type zinc-finger fold.

The polypeptide is Zinc finger CCHC domain-containing protein 2 (Homo sapiens (Human)).